Reading from the N-terminus, the 485-residue chain is ATP synthase subunit beta 1 (485 aa).

157–164 (GGAGVGKT) provides a ligand contact to ATP.

Belongs to the ATPase alpha/beta chains family. As to quaternary structure, F-type ATPases have 2 components, CF(1) - the catalytic core - and CF(0) - the membrane proton channel. CF(1) has five subunits: alpha(3), beta(3), gamma(1), delta(1), epsilon(1). CF(0) has three main subunits: a(1), b(2) and c(9-12). The alpha and beta chains form an alternating ring which encloses part of the gamma chain. CF(1) is attached to CF(0) by a central stalk formed by the gamma and epsilon chains, while a peripheral stalk is formed by the delta and b chains.

The protein localises to the cell inner membrane. The catalysed reaction is ATP + H2O + 4 H(+)(in) = ADP + phosphate + 5 H(+)(out). Its function is as follows. Produces ATP from ADP in the presence of a proton gradient across the membrane. The catalytic sites are hosted primarily by the beta subunits. The protein is ATP synthase subunit beta 1 of Psychromonas ingrahamii (strain DSM 17664 / CCUG 51855 / 37).